Consider the following 342-residue polypeptide: MKALAKLERAPGLTLTRVKRPEVGHNDVLIKIRRTAICGTDIHIWKWDDWAQKTIPVPMHVGHEYVGEIVEMGQEVRGFAIGDRVSGEGHITCGFCRNCRAGRRHLCRNTVGVGVNREGAFAEYLAIPAFNAFKIPPEISDDLASIFDPFGNATHTALSFNLVGEDVLITGAGPIGIMAVAIAKHVGARNVVITDINDYRLELARKMGATRAVNVARESLRDVMAELRMTEGFDVGLEMSGVPSAFTSLLEAMNHGGKVALLGIPPAQTAIDWNQVIFKGLEIKGIYGREMFETWYKMVAMLQSGLDLSPIVTHRFAVDDYEKGFAAMLSGESGKVILDWTA.

Residue Cys-38 participates in Zn(2+) binding. Catalysis depends on charge relay system residues Thr-40 and His-43. Zn(2+) contacts are provided by His-63, Glu-64, Cys-93, Cys-96, Cys-99, and Cys-107. Residues Ile-175, Asp-195, Arg-200, 262–264, and 286–287 each bind NAD(+); these read LGI and IY.

This sequence belongs to the zinc-containing alcohol dehydrogenase family. Homotetramer. Zn(2+) is required as a cofactor.

It localises to the cytoplasm. It catalyses the reaction L-threonine + NAD(+) = (2S)-2-amino-3-oxobutanoate + NADH + H(+). It participates in amino-acid degradation; L-threonine degradation via oxydo-reductase pathway; glycine from L-threonine: step 1/2. Catalyzes the NAD(+)-dependent oxidation of L-threonine to 2-amino-3-ketobutyrate. The chain is L-threonine 3-dehydrogenase from Burkholderia vietnamiensis (strain G4 / LMG 22486) (Burkholderia cepacia (strain R1808)).